The chain runs to 168 residues: G/U mismatch-specific DNA glycosylase (168 aa).

It belongs to the uracil-DNA glycosylase (UDG) superfamily. TDG/mug family. As to quaternary structure, binds DNA as a monomer.

The protein localises to the cytoplasm. It catalyses the reaction Specifically hydrolyzes mismatched double-stranded DNA and polynucleotides, releasing free uracil.. Its function is as follows. Excises ethenocytosine and uracil, which can arise by alkylation or deamination of cytosine, respectively, from the corresponding mispairs with guanine in ds-DNA. It is capable of hydrolyzing the carbon-nitrogen bond between the sugar-phosphate backbone of the DNA and the mispaired base. The complementary strand guanine functions in substrate recognition. Required for DNA damage lesion repair in stationary-phase cells. In Escherichia coli O139:H28 (strain E24377A / ETEC), this protein is G/U mismatch-specific DNA glycosylase.